The primary structure comprises 56 residues: MSKGTPSMGKRQKRTHAKCRRCGSVSLNIHTKQCTSCGFGRTSRMRSYQWQRKCKF.

Zn(2+) is bound by residues Cys-19, Cys-22, Cys-34, and Cys-37. The segment at 19 to 37 adopts a C4-type zinc-finger fold; sequence CRRCGSVSLNIHTKQCTSC.

This sequence belongs to the eukaryotic ribosomal protein eL37 family. Zn(2+) is required as a cofactor.

In terms of biological role, binds to the 23S rRNA. This is Large ribosomal subunit protein eL37 from Methanococcoides burtonii (strain DSM 6242 / NBRC 107633 / OCM 468 / ACE-M).